We begin with the raw amino-acid sequence, 110 residues long: Insulin-2 (110 aa).

Residues 1–24 form the signal peptide; the sequence is MALWMRFLPLLALLFLWESHPTQA. Intrachain disulfides connect Cys31/Cys96, Cys43/Cys109, and Cys95/Cys100. Positions 57 to 87 are cleaved as a propeptide — c peptide; that stretch reads EVEDPQVAQLELGGGPGAGDLQTLALEVAQQ.

Belongs to the insulin family. In terms of assembly, heterodimer of a B chain and an A chain linked by two disulfide bonds.

Its subcellular location is the secreted. Insulin decreases blood glucose concentration. It increases cell permeability to monosaccharides, amino acids and fatty acids. It accelerates glycolysis, the pentose phosphate cycle, and glycogen synthesis in liver. This is Insulin-2 (Ins2) from Mus musculus (Mouse).